A 279-amino-acid chain; its full sequence is Phospholipase A and acyltransferase 5 (279 aa).

2 disordered regions span residues 1–53 (MGLS…GLNS) and 70–117 (QLPA…ENEG). Over residues 97 to 106 (LETTPSQKAD) the composition is skewed to polar residues. Residues 135–249 (LIEIFRIGYE…LRYGVPRSQQ (115 aa)) form the LRAT domain. Active-site residues include H145 and H157. Residue C233 is the Acyl-thioester intermediate of the active site.

This sequence belongs to the H-rev107 family. In terms of tissue distribution, highest expression level in testis and pancreas.

It is found in the cytoplasm. The protein localises to the cytosol. The catalysed reaction is a 1,2-diacyl-sn-glycero-3-phosphocholine + H2O = a 1-acyl-sn-glycero-3-phosphocholine + a fatty acid + H(+). The enzyme catalyses a 1,2-diacyl-sn-glycero-3-phosphocholine + H2O = a 2-acyl-sn-glycero-3-phosphocholine + a fatty acid + H(+). It carries out the reaction 1-hexadecanoyl-2-(5Z,8Z,11Z,14Z-eicosatetraenoyl)-sn-glycero-3-phosphocholine + 1,2-di-(9Z-octadecenoyl)-sn-glycero-3-phosphoethanolamine = N-(5Z,8Z,11Z,14Z-eicosatetraenoyl)-1,2-di-(9Z-octadecenoyl)-sn-glycero-3-phosphoethanolamine + 1-hexadecanoyl-sn-glycero-3-phosphocholine + H(+). It catalyses the reaction 1,2-di-(9Z-octadecenoyl)-sn-glycero-3-phosphoethanolamine + 1,2-dihexadecanoyl-sn-glycero-3-phosphocholine = N-hexadecanoyl-1,2-di-(9Z-octadecenoyl)-sn-glycero-3-phosphoethanolamine + 1-hexadecanoyl-sn-glycero-3-phosphocholine + H(+). The catalysed reaction is 1,2-di-(9Z-octadecenoyl)-sn-glycero-3-phosphoethanolamine + 1,2-dihexadecanoyl-sn-glycero-3-phosphocholine = N-hexadecanoyl-1,2-di-(9Z-octadecenoyl)-sn-glycero-3-phosphoethanolamine + 2-hexadecanoyl-sn-glycero-3-phosphocholine + H(+). The enzyme catalyses a 1,2-diacyl-sn-glycero-3-phosphoethanolamine + a 1,2-diacyl-sn-glycero-3-phosphocholine = an N-acyl-1,2-diacyl-sn-glycero-3-phosphoethanolamine + a 1-acyl-sn-glycero-3-phosphocholine + H(+). It carries out the reaction a 1,2-diacyl-sn-glycero-3-phosphoethanolamine + a 1,2-diacyl-sn-glycero-3-phosphocholine = an N-acyl-1,2-diacyl-sn-glycero-3-phosphoethanolamine + a 2-acyl-sn-glycero-3-phosphocholine + H(+). It catalyses the reaction 1-hexadecanoyl-2-(9Z-octadecenoyl)-sn-glycero-3-phosphocholine + 1,2-di-(9Z-octadecenoyl)-sn-glycero-3-phosphoethanolamine = N,1,2-tri-(9Z-octadecenoyl)-sn-glycero-3-phosphoethanolamine + 1-hexadecanoyl-sn-glycero-3-phosphocholine + H(+). In terms of biological role, exhibits both phospholipase A1/2 and acyltransferase activities. Shows phospholipase A1 (PLA1) and A2 (PLA2) activity, catalyzing the calcium-independent release of fatty acids from the sn-1 or sn-2 position of glycerophospholipids. Shows N-acyltransferase activity, catalyzing the calcium-independent transfer of a fatty acyl group at the sn-1 position of phosphatidylcholine (PC) and other glycerophospholipids to the primary amine of phosphatidylethanolamine (PE), forming N-acylphosphatidylethanolamine (NAPE), which serves as precursor for N-acylethanolamines (NAEs). The polypeptide is Phospholipase A and acyltransferase 5 (Homo sapiens (Human)).